The following is a 117-amino-acid chain: ATP-dependent Clp protease adapter protein ClpS 1 (117 aa).

The protein belongs to the ClpS family. Binds to the N-terminal domain of the chaperone ClpA.

In terms of biological role, involved in the modulation of the specificity of the ClpAP-mediated ATP-dependent protein degradation. In Agrobacterium fabrum (strain C58 / ATCC 33970) (Agrobacterium tumefaciens (strain C58)), this protein is ATP-dependent Clp protease adapter protein ClpS 1.